Consider the following 1140-residue polypeptide: Probable DNA-directed RNA polymerase II subunit RPB2 homolog (1140 aa).

Asp773 contacts Mg(2+). Zn(2+)-binding residues include Cys1092, Cys1095, Cys1105, and Cys1108. The segment at 1092–1108 adopts a C4-type zinc-finger fold; sequence CKDCGMMSSTSKKCHHC.

Belongs to the RNA polymerase beta chain family.

The enzyme catalyses RNA(n) + a ribonucleoside 5'-triphosphate = RNA(n+1) + diphosphate. Its function is as follows. Component of the DNA-dependent RNA polymerase that catalyzes the transcription of DNA into RNA using the four ribonucleoside triphosphates as substrates. Second largest component of RNA polymerase II which synthesizes mRNA precursors and many functional non-coding RNAs. Proposed to contribute to the polymerase catalytic activity and forms the polymerase active center together with the largest subunit. This Invertebrate iridescent virus 3 (IIV-3) protein is Probable DNA-directed RNA polymerase II subunit RPB2 homolog.